We begin with the raw amino-acid sequence, 85 residues long: uncharacterized protein (85 aa).

It belongs to the ycf76 family.

The protein resides in the plastid. The protein localises to the chloroplast. This is an uncharacterized protein from Saccharum hybrid (Sugarcane).